The following is a 201-amino-acid chain: Holliday junction branch migration complex subunit RuvA (201 aa).

Residues 1–63 (MYDYIKGTVT…EDNISLFGFQ (63 aa)) are domain I. The segment at 64 to 142 (TTEERYLFKK…DVVASEIVYV (79 aa)) is domain II. Residues 143–153 (APENDMVAGLS) are flexible linker. The segment at 153–201 (SPQLEEAVLALEALGYSTRELKKVIPKLSKEEDLTSDAYIKLALQLMTK) is domain III.

The protein belongs to the RuvA family. Homotetramer. Forms an RuvA(8)-RuvB(12)-Holliday junction (HJ) complex. HJ DNA is sandwiched between 2 RuvA tetramers; dsDNA enters through RuvA and exits via RuvB. An RuvB hexamer assembles on each DNA strand where it exits the tetramer. Each RuvB hexamer is contacted by two RuvA subunits (via domain III) on 2 adjacent RuvB subunits; this complex drives branch migration. In the full resolvosome a probable DNA-RuvA(4)-RuvB(12)-RuvC(2) complex forms which resolves the HJ.

It is found in the cytoplasm. In terms of biological role, the RuvA-RuvB-RuvC complex processes Holliday junction (HJ) DNA during genetic recombination and DNA repair, while the RuvA-RuvB complex plays an important role in the rescue of blocked DNA replication forks via replication fork reversal (RFR). RuvA specifically binds to HJ cruciform DNA, conferring on it an open structure. The RuvB hexamer acts as an ATP-dependent pump, pulling dsDNA into and through the RuvAB complex. HJ branch migration allows RuvC to scan DNA until it finds its consensus sequence, where it cleaves and resolves the cruciform DNA. This chain is Holliday junction branch migration complex subunit RuvA, found in Listeria monocytogenes serotype 4b (strain CLIP80459).